Here is a 498-residue protein sequence, read N- to C-terminus: Cytochrome P450 71B24 (498 aa).

The chain crosses the membrane as a helical span at residues 1–21 (MSILLYFIALLSLIIIKKIKD). Cys442 is a heme binding site.

It belongs to the cytochrome P450 family. Heme is required as a cofactor.

Its subcellular location is the membrane. The polypeptide is Cytochrome P450 71B24 (CYP71B24) (Arabidopsis thaliana (Mouse-ear cress)).